A 652-amino-acid polypeptide reads, in one-letter code: DNA ligase (652 aa).

NAD(+)-binding positions include 29 to 33 (DAEYD), 78 to 79 (SL), and Glu-107. Lys-109 serves as the catalytic N6-AMP-lysine intermediate. Residues Arg-130, Glu-164, Lys-278, and Lys-302 each contribute to the NAD(+) site. Zn(2+) is bound by residues Cys-395, Cys-398, Cys-413, and Cys-418. Residues 577-652 (DENAALSGMT…IKDEAWLESL (76 aa)) enclose the BRCT domain.

This sequence belongs to the NAD-dependent DNA ligase family. LigA subfamily. Mg(2+) serves as cofactor. The cofactor is Mn(2+).

The enzyme catalyses NAD(+) + (deoxyribonucleotide)n-3'-hydroxyl + 5'-phospho-(deoxyribonucleotide)m = (deoxyribonucleotide)n+m + AMP + beta-nicotinamide D-nucleotide.. DNA ligase that catalyzes the formation of phosphodiester linkages between 5'-phosphoryl and 3'-hydroxyl groups in double-stranded DNA using NAD as a coenzyme and as the energy source for the reaction. It is essential for DNA replication and repair of damaged DNA. The chain is DNA ligase from Streptococcus suis (strain 05ZYH33).